The following is a 490-amino-acid chain: Betaine aldehyde dehydrogenase (490 aa).

The K(+) site is built by Ile-27 and Asp-93. 150-152 (GAW) is an NAD(+) binding site. Lys-162 serves as the catalytic Charge relay system. An NAD(+)-binding site is contributed by 176–179 (KPSE). Residue Val-180 coordinates K(+). 230–233 (GTDT) is a binding site for NAD(+). Leu-246 is a K(+) binding site. The active-site Proton acceptor is the Glu-252. The NAD(+) site is built by Gly-254, Cys-286, and Glu-387. Cys-286 acts as the Nucleophile in catalysis. Cys-286 is subject to Cysteine sulfenic acid (-SOH). Residues Lys-457 and Gly-460 each coordinate K(+). The active-site Charge relay system is the Glu-464.

This sequence belongs to the aldehyde dehydrogenase family. Dimer of dimers. Requires K(+) as cofactor.

It catalyses the reaction betaine aldehyde + NAD(+) + H2O = glycine betaine + NADH + 2 H(+). The protein operates within amine and polyamine biosynthesis; betaine biosynthesis via choline pathway; betaine from betaine aldehyde: step 1/1. Its function is as follows. Involved in the biosynthesis of the osmoprotectant glycine betaine. Catalyzes the irreversible oxidation of betaine aldehyde to the corresponding acid. This chain is Betaine aldehyde dehydrogenase, found in Pseudomonas syringae pv. syringae (strain B728a).